We begin with the raw amino-acid sequence, 114 residues long: Large ribosomal subunit protein bL19 (114 aa).

Belongs to the bacterial ribosomal protein bL19 family.

This protein is located at the 30S-50S ribosomal subunit interface and may play a role in the structure and function of the aminoacyl-tRNA binding site. This chain is Large ribosomal subunit protein bL19, found in Lactococcus lactis subsp. cremoris (strain MG1363).